The chain runs to 325 residues: 5-dehydro-2-deoxygluconokinase (325 aa).

The protein belongs to the carbohydrate kinase PfkB family.

The catalysed reaction is 5-dehydro-2-deoxy-D-gluconate + ATP = 6-phospho-5-dehydro-2-deoxy-D-gluconate + ADP + H(+). Its pathway is polyol metabolism; myo-inositol degradation into acetyl-CoA; acetyl-CoA from myo-inositol: step 5/7. In terms of biological role, catalyzes the phosphorylation of 5-dehydro-2-deoxy-D-gluconate (2-deoxy-5-keto-D-gluconate or DKG) to 6-phospho-5-dehydro-2-deoxy-D-gluconate (DKGP). This is 5-dehydro-2-deoxygluconokinase from Listeria monocytogenes serotype 4b (strain CLIP80459).